A 1238-amino-acid chain; its full sequence is Lysine-specific demethylase JMJ703 (1238 aa).

Positions Glu56–Cys79 are disordered. A compositionally biased stretch (polar residues) spans Ala62–Cys79. In terms of domain architecture, JmjN spans Ala154–Pro195. Positions Lys215–Pro266 are disordered. The segment covering Asn221 to Lys238 has biased composition (basic residues). Over residues Asn245–Pro259 the composition is skewed to polar residues. In terms of domain architecture, JmjC spans Lys348–Arg514. Residues His394, Glu396, and His482 each contribute to the Fe cation site. 4 disordered regions span residues Gly699–Glu725, Tyr777–Ser798, Thr834–Glu863, and Ala910–Thr978. Over residues Ser706–Ser719 the composition is skewed to low complexity. Positions Ala910–Gln923 are enriched in polar residues. A compositionally biased stretch (low complexity) spans Ser924 to Ala936. Polar residues predominate over residues Ser964–Thr978. Residues Val1019–Ala1077 enclose the FYR N-terminal domain. The 91-residue stretch at Met1079–Arg1169 folds into the FYR C-terminal domain.

Requires Fe(2+) as cofactor. As to expression, expressed in roots, leaf sheaths, stems and panicles.

Its subcellular location is the nucleus. It carries out the reaction N(6),N(6),N(6)-trimethyl-L-lysyl(4)-[histone H3] + 3 2-oxoglutarate + 3 O2 = L-lysyl(4)-[histone H3] + 3 formaldehyde + 3 succinate + 3 CO2. In terms of biological role, histone demethylase that demethylates 'Lys-4' (H3K4me) of histone H3 with a specific activity for H3K4me3, H3K4me2 and H3K4me1. No activity on H3K9me3/2/1, H3K27me3/2/1 and H3K36me3/2/1. Involved in the control of stem elongation by regulating methylation states of H3K4me3 on cytokinin oxidase (CKX) gene family, which may cause increased expression of CKX genes and reduced cytokinin levels. Prevents ectopic retrotransposition by regulating the levels of H3K4me3 in two non-LTR retrotransposons KARMA and LINE-1 (L1) and reinforcing their repressed states. This Oryza sativa subsp. japonica (Rice) protein is Lysine-specific demethylase JMJ703 (JMJ703).